The primary structure comprises 181 residues: Inner membrane-spanning protein YciB (181 aa).

5 helical membrane passes run F3–Y23, T49–Q69, W76–F96, V119–F139, and F149–L169.

The protein belongs to the YciB family.

The protein localises to the cell inner membrane. Its function is as follows. Plays a role in cell envelope biogenesis, maintenance of cell envelope integrity and membrane homeostasis. The polypeptide is Inner membrane-spanning protein YciB (Nitrosospira multiformis (strain ATCC 25196 / NCIMB 11849 / C 71)).